We begin with the raw amino-acid sequence, 150 residues long: Cytochrome c oxidase subunit 5A, mitochondrial (150 aa).

The transit peptide at 1-41 (MLGAALRRCAVAAAARAGPRGLLHSAPTPGPAAAIQSVRCY) directs the protein to the mitochondrion. The SIFI-degron motif lies at 2-17 (LGAALRRCAVAAAARA). Residues Lys87 and Lys113 each carry the N6-acetyllysine modification. Phosphothreonine is present on Thr141.

It belongs to the cytochrome c oxidase subunit 5A family. In terms of assembly, component of the cytochrome c oxidase (complex IV, CIV), a multisubunit enzyme composed of 14 subunits. The complex is composed of a catalytic core of 3 subunits MT-CO1, MT-CO2 and MT-CO3, encoded in the mitochondrial DNA, and 11 supernumerary subunits COX4I, COX5A, COX5B, COX6A, COX6B, COX6C, COX7A, COX7B, COX7C, COX8 and NDUFA4, which are encoded in the nuclear genome. The complex exists as a monomer or a dimer and forms supercomplexes (SCs) in the inner mitochondrial membrane with NADH-ubiquinone oxidoreductase (complex I, CI) and ubiquinol-cytochrome c oxidoreductase (cytochrome b-c1 complex, complex III, CIII), resulting in different assemblies (supercomplex SCI(1)III(2)IV(1) and megacomplex MCI(2)III(2)IV(2)). Interacts with AFG1L. Interacts with RAB5IF. Post-translationally, in response to mitochondrial stress, the precursor protein is ubiquitinated by the SIFI complex in the cytoplasm before mitochondrial import, leading to its degradation. Within the SIFI complex, UBR4 initiates ubiquitin chain that are further elongated or branched by KCMF1.

It is found in the mitochondrion inner membrane. Its pathway is energy metabolism; oxidative phosphorylation. In terms of biological role, component of the cytochrome c oxidase, the last enzyme in the mitochondrial electron transport chain which drives oxidative phosphorylation. The respiratory chain contains 3 multisubunit complexes succinate dehydrogenase (complex II, CII), ubiquinol-cytochrome c oxidoreductase (cytochrome b-c1 complex, complex III, CIII) and cytochrome c oxidase (complex IV, CIV), that cooperate to transfer electrons derived from NADH and succinate to molecular oxygen, creating an electrochemical gradient over the inner membrane that drives transmembrane transport and the ATP synthase. Cytochrome c oxidase is the component of the respiratory chain that catalyzes the reduction of oxygen to water. Electrons originating from reduced cytochrome c in the intermembrane space (IMS) are transferred via the dinuclear copper A center (CU(A)) of subunit 2 and heme A of subunit 1 to the active site in subunit 1, a binuclear center (BNC) formed by heme A3 and copper B (CU(B)). The BNC reduces molecular oxygen to 2 water molecules using 4 electrons from cytochrome c in the IMS and 4 protons from the mitochondrial matrix. In Plecturocebus donacophilus (Bolivian gray titi monkey), this protein is Cytochrome c oxidase subunit 5A, mitochondrial (COX5A).